Consider the following 401-residue polypeptide: Beta-ketoadipyl-CoA thiolase (401 aa).

The active-site Acyl-thioester intermediate is C91. Residues H357 and C387 each act as proton acceptor in the active site.

This sequence belongs to the thiolase-like superfamily. Thiolase family.

The catalysed reaction is succinyl-CoA + acetyl-CoA = 3-oxoadipyl-CoA + CoA. It functions in the pathway aromatic compound metabolism; beta-ketoadipate pathway; acetyl-CoA and succinyl-CoA from 3-oxoadipate: step 2/2. Functionally, catalyzes thiolytic cleavage of beta-ketoadipyl-CoA to succinyl-CoA and acetyl-CoA. This is Beta-ketoadipyl-CoA thiolase (pcaF) from Pseudomonas aeruginosa (strain ATCC 15692 / DSM 22644 / CIP 104116 / JCM 14847 / LMG 12228 / 1C / PRS 101 / PAO1).